Here is a 28-residue protein sequence, read N- to C-terminus: Short cationic peptide-1b (28 aa).

Glutamate 28 is modified (glutamic acid 1-amide).

Expressed by the venom gland.

It is found in the secreted. In Cupiennius salei (American wandering spider), this protein is Short cationic peptide-1b.